The sequence spans 706 residues: Elongation factor G 1 (706 aa).

A tr-type G domain is found at 8 to 290; sequence NRYRNIGICA…AVIDYLPAPT (283 aa). Residues 17–24, 88–92, and 142–145 contribute to the GTP site; these read AHVDAGKT, DTPGH, and NKMD.

This sequence belongs to the TRAFAC class translation factor GTPase superfamily. Classic translation factor GTPase family. EF-G/EF-2 subfamily.

It is found in the cytoplasm. Functionally, catalyzes the GTP-dependent ribosomal translocation step during translation elongation. During this step, the ribosome changes from the pre-translocational (PRE) to the post-translocational (POST) state as the newly formed A-site-bound peptidyl-tRNA and P-site-bound deacylated tRNA move to the P and E sites, respectively. Catalyzes the coordinated movement of the two tRNA molecules, the mRNA and conformational changes in the ribosome. This Pseudomonas aeruginosa (strain ATCC 15692 / DSM 22644 / CIP 104116 / JCM 14847 / LMG 12228 / 1C / PRS 101 / PAO1) protein is Elongation factor G 1.